A 383-amino-acid chain; its full sequence is ATP phosphoribosyltransferase regulatory subunit (383 aa).

This sequence belongs to the class-II aminoacyl-tRNA synthetase family. HisZ subfamily. Heteromultimer composed of HisG and HisZ subunits.

Its subcellular location is the cytoplasm. The protein operates within amino-acid biosynthesis; L-histidine biosynthesis; L-histidine from 5-phospho-alpha-D-ribose 1-diphosphate: step 1/9. Required for the first step of histidine biosynthesis. May allow the feedback regulation of ATP phosphoribosyltransferase activity by histidine. The sequence is that of ATP phosphoribosyltransferase regulatory subunit from Paraburkholderia phymatum (strain DSM 17167 / CIP 108236 / LMG 21445 / STM815) (Burkholderia phymatum).